The following is a 345-amino-acid chain: UDP-3-O-acylglucosamine N-acyltransferase (345 aa).

His-237 (proton acceptor) is an active-site residue.

Belongs to the transferase hexapeptide repeat family. LpxD subfamily. In terms of assembly, homotrimer.

It carries out the reaction a UDP-3-O-[(3R)-3-hydroxyacyl]-alpha-D-glucosamine + a (3R)-hydroxyacyl-[ACP] = a UDP-2-N,3-O-bis[(3R)-3-hydroxyacyl]-alpha-D-glucosamine + holo-[ACP] + H(+). It participates in bacterial outer membrane biogenesis; LPS lipid A biosynthesis. Catalyzes the N-acylation of UDP-3-O-acylglucosamine using 3-hydroxyacyl-ACP as the acyl donor. Is involved in the biosynthesis of lipid A, a phosphorylated glycolipid that anchors the lipopolysaccharide to the outer membrane of the cell. This chain is UDP-3-O-acylglucosamine N-acyltransferase, found in Geobacter sp. (strain M21).